The primary structure comprises 486 residues: Palmitoleoyl-protein carboxylesterase notum2 (486 aa).

The first 18 residues, 1 to 18 (MRILEIFAILLILKEVRP), serve as a signal peptide directing secretion. The N-linked (GlcNAc...) asparagine glycan is linked to N183. Residues S223, D331, and H380 each act as charge relay system in the active site.

It belongs to the pectinacetylesterase family. Notum subfamily.

It localises to the secreted. The enzyme catalyses [Wnt protein]-O-(9Z)-hexadecenoyl-L-serine + H2O = [Wnt protein]-L-serine + (9Z)-hexadecenoate + H(+). Its function is as follows. Carboxylesterase that acts as a key negative regulator of the Wnt signaling pathway by specifically mediating depalmitoleoylation of WNT proteins. Serine palmitoleoylation of WNT proteins is required for efficient binding to frizzled receptors. The protein is Palmitoleoyl-protein carboxylesterase notum2 of Xenopus laevis (African clawed frog).